The sequence spans 193 residues: Ion-translocating oxidoreductase complex subunit A (193 aa).

The next 6 helical transmembrane spans lie at 5 to 25 (LMLF…FLGL), 39 to 59 (LGMG…AWLI), 62 to 82 (FILL…FIIA), 102 to 122 (LLGI…VALL), 134 to 154 (ALYG…FAAI), and 171 to 191 (SIAL…TGLV).

This sequence belongs to the NqrDE/RnfAE family. The complex is composed of six subunits: RnfA, RnfB, RnfC, RnfD, RnfE and RnfG.

The protein localises to the cell inner membrane. Part of a membrane-bound complex that couples electron transfer with translocation of ions across the membrane. This is Ion-translocating oxidoreductase complex subunit A from Sodalis glossinidius (strain morsitans).